Consider the following 394-residue polypeptide: Elongation factor Tu (394 aa).

Positions 10 to 204 (KPHVNVGTIG…YLDSYIPEPE (195 aa)) constitute a tr-type G domain. The segment at 19-26 (GHVDHGKT) is G1. A GTP-binding site is contributed by 19–26 (GHVDHGKT). Residue threonine 26 coordinates Mg(2+). Positions 60–64 (GITIN) are G2. Residues 81-84 (DCPG) form a G3 region. Residues 81 to 85 (DCPGH) and 136 to 139 (NKCD) each bind GTP. Residues 136 to 139 (NKCD) are G4. Residues 174-176 (SAL) are G5.

It belongs to the TRAFAC class translation factor GTPase superfamily. Classic translation factor GTPase family. EF-Tu/EF-1A subfamily. Monomer.

Its subcellular location is the cytoplasm. It catalyses the reaction GTP + H2O = GDP + phosphate + H(+). GTP hydrolase that promotes the GTP-dependent binding of aminoacyl-tRNA to the A-site of ribosomes during protein biosynthesis. The chain is Elongation factor Tu from Enterobacter sp. (strain 638).